The chain runs to 246 residues: Transcriptional regulatory protein LytR (246 aa).

Positions 2-116 (KALIIDDEPL…RIEQAVNKVR (115 aa)) constitute a Response regulatory domain. Asp53 carries the post-translational modification 4-aspartylphosphate. An HTH LytTR-type domain is found at 141-245 (LPVEIDDKIH…MKDFKASIGL (105 aa)).

Homodimer; when phosphorylated. In terms of processing, phosphorylated and dephosphorylated by LytS.

The protein localises to the cytoplasm. Functionally, member of the two-component regulatory system LytR/LytS that regulates genes involved in autolysis, programmed cell death, biofilm formation and cell wall metabolism. Also participates in sensing and responding to host defense cationic antimicrobial peptides (HDPs). Upon phosphorylation by LytS, functions as a transcription regulator by direct binding to promoter regions of target genes including lrgA and lrgB, to positively regulate their expression. The protein is Transcriptional regulatory protein LytR (lytR) of Staphylococcus aureus (strain MW2).